Here is a 235-residue protein sequence, read N- to C-terminus: Urease accessory protein UreF (235 aa).

Belongs to the UreF family. UreD, UreF and UreG form a complex that acts as a GTP-hydrolysis-dependent molecular chaperone, activating the urease apoprotein by helping to assemble the nickel containing metallocenter of UreC. The UreE protein probably delivers the nickel.

Its subcellular location is the cytoplasm. Required for maturation of urease via the functional incorporation of the urease nickel metallocenter. The sequence is that of Urease accessory protein UreF from Ureaplasma parvum serovar 3 (strain ATCC 27815 / 27 / NCTC 11736).